The sequence spans 1073 residues: MPKRTDIKSILILGAGPIVIGQACEFDYSGAQACKALREEGYRVILVNSNPATIMTDPEMADATYIEPIHWEVVRKIIEKERPDAVLPTMGGQTALNCALELERQGVLEEFGVTMIGATADAIDKAEDRRRFDVAMKKIGLETARSGIAHTMEEALAVAADVGFPCIIRPSFTMGGSGGGIAYNREEFEEICARGLDLSPTKELLIDESLIGWKEYEMEVVRDKNDNCIIVCSIENFDAMGIHTGDSITVAPAQTLTDKEYQIMRNASMAVLREIGVETGGSNVQFAVNPKNGRLIVIEMNPRVSRSSALASKATGFPIAKVAAKLAVGYTLDELMNDITGGRTPASFEPSIDYVVTKIPRFNFEKFAGANDRLTTQMKSVGEVMAIGRTQQESLQKALRGLEVGATGFDPKVSLDDPEALTKIRRELKDAGAERIWYIADAFRAGLSVDGVFNLTNIDRWFLVQIEELVRLEEKVAEVGITGLNAEFLRQLKRKGFADARLAKLAGVREAEIRKLRDQYDLHPVYKRVDTCAAEFATDTAYMYSTYEEECEANPSTDREKIMVLGGGPNRIGQGIEFDYCCVHASLALREDGYETIMVNCNPETVSTDYDTSDRLYFEPVTLEDVLEIVRIEKPKGVIVQYGGQTPLKLARALEAAGVPVIGTSPDAIDRAEDRERFQHAVDRLKLKQPANATVTAIEMAVEKAKEIGYPLVVRPSYVLGGRAMEIVYDEADLRRYFQTAVSVSNDAPVLLDHFLDDAVEVDVDAICDGEMVLIGGIMEHIEQAGVHSGDSACSLPAYTLSQEIQDVMRQQVQKLAFELQVRGLMNVQFAVKNNEVYLIEVNPRAARTVPFVSKATGVPLAKVAARVMAGKSLAEQGVTKEVIPPYYSVKEVVLPFNKFPGVDPLLGPEMRSTGEVMGVGRTFAEAFAKAQLGSNSTMKKHGRALLSVREGDKERVVDLAAKLLKQGFELDATHGTAIVLGEAGINPRLVNKVHEGRPHIQDRIKNGEYTYIINTTSGRRAIEDSRVIRRSALQYKVHYDTTLNGGFATAMALNADATEKVISVQEMHAQIK.

Residues 2-403 (PKRTDIKSIL…SLQKALRGLE (402 aa)) form a carboxyphosphate synthetic domain region. The ATP site is built by Arg129, Arg169, Gly175, Gly176, Glu208, Leu210, Glu215, Gly241, Ile242, His243, Gln285, and Glu299. Positions 133-328 (DVAMKKIGLE…IAKVAAKLAV (196 aa)) constitute an ATP-grasp 1 domain. Gln285, Glu299, and Asn301 together coordinate Mg(2+). Positions 285, 299, and 301 each coordinate Mn(2+). An oligomerization domain region spans residues 404–553 (VGATGFDPKV…YSTYEEECEA (150 aa)). The carbamoyl phosphate synthetic domain stretch occupies residues 554 to 936 (NPSTDREKIM…AFAKAQLGSN (383 aa)). Residues 679 to 870 (QHAVDRLKLK…LAKVAARVMA (192 aa)) enclose the ATP-grasp 2 domain. 10 residues coordinate ATP: Arg715, His754, Leu756, Glu761, Gly786, Val787, His788, Ser789, Gln829, and Glu841. Residues Gln829, Glu841, and Asn843 each contribute to the Mg(2+) site. Residues Gln829, Glu841, and Asn843 each coordinate Mn(2+). Positions 937 to 1073 (STMKKHGRAL…SVQEMHAQIK (137 aa)) constitute an MGS-like domain. Residues 937-1073 (STMKKHGRAL…SVQEMHAQIK (137 aa)) form an allosteric domain region.

Belongs to the CarB family. As to quaternary structure, composed of two chains; the small (or glutamine) chain promotes the hydrolysis of glutamine to ammonia, which is used by the large (or ammonia) chain to synthesize carbamoyl phosphate. Tetramer of heterodimers (alpha,beta)4. The cofactor is Mg(2+). Mn(2+) is required as a cofactor.

The enzyme catalyses hydrogencarbonate + L-glutamine + 2 ATP + H2O = carbamoyl phosphate + L-glutamate + 2 ADP + phosphate + 2 H(+). The catalysed reaction is hydrogencarbonate + NH4(+) + 2 ATP = carbamoyl phosphate + 2 ADP + phosphate + 2 H(+). The protein operates within amino-acid biosynthesis; L-arginine biosynthesis; carbamoyl phosphate from bicarbonate: step 1/1. It functions in the pathway pyrimidine metabolism; UMP biosynthesis via de novo pathway; (S)-dihydroorotate from bicarbonate: step 1/3. Functionally, large subunit of the glutamine-dependent carbamoyl phosphate synthetase (CPSase). CPSase catalyzes the formation of carbamoyl phosphate from the ammonia moiety of glutamine, carbonate, and phosphate donated by ATP, constituting the first step of 2 biosynthetic pathways, one leading to arginine and/or urea and the other to pyrimidine nucleotides. The large subunit (synthetase) binds the substrates ammonia (free or transferred from glutamine from the small subunit), hydrogencarbonate and ATP and carries out an ATP-coupled ligase reaction, activating hydrogencarbonate by forming carboxy phosphate which reacts with ammonia to form carbamoyl phosphate. The chain is Carbamoyl phosphate synthase large chain from Escherichia coli O157:H7.